Here is a 539-residue protein sequence, read N- to C-terminus: 2-isopropylmalate synthase (539 aa).

The Pyruvate carboxyltransferase domain maps to 8–269 (VLIFDTTLRD…YFNPFFGRPP (262 aa)). 4 residues coordinate Mn(2+): Asp-17, His-208, His-210, and Asn-244. The regulatory domain stretch occupies residues 408 to 539 (QLKLVQVSCG…DLAKVDKKGI (132 aa)).

The protein belongs to the alpha-IPM synthase/homocitrate synthase family. LeuA type 1 subfamily. As to quaternary structure, homodimer. Mn(2+) is required as a cofactor.

The protein resides in the cytoplasm. The enzyme catalyses 3-methyl-2-oxobutanoate + acetyl-CoA + H2O = (2S)-2-isopropylmalate + CoA + H(+). It functions in the pathway amino-acid biosynthesis; L-leucine biosynthesis; L-leucine from 3-methyl-2-oxobutanoate: step 1/4. Its function is as follows. Catalyzes the condensation of the acetyl group of acetyl-CoA with 3-methyl-2-oxobutanoate (2-ketoisovalerate) to form 3-carboxy-3-hydroxy-4-methylpentanoate (2-isopropylmalate). This is 2-isopropylmalate synthase from Prochlorococcus marinus (strain NATL1A).